Reading from the N-terminus, the 360-residue chain is Phenylalanine--tRNA ligase alpha subunit (360 aa).

E260 serves as a coordination point for Mg(2+).

Belongs to the class-II aminoacyl-tRNA synthetase family. Phe-tRNA synthetase alpha subunit type 1 subfamily. In terms of assembly, tetramer of two alpha and two beta subunits. The cofactor is Mg(2+).

It is found in the cytoplasm. It catalyses the reaction tRNA(Phe) + L-phenylalanine + ATP = L-phenylalanyl-tRNA(Phe) + AMP + diphosphate + H(+). This Rhizobium etli (strain CIAT 652) protein is Phenylalanine--tRNA ligase alpha subunit.